The following is a 299-amino-acid chain: Probable lipid kinase YegS (299 aa).

In terms of domain architecture, DAGKc spans 2–133; the sequence is AEFPASLLIL…IDMAQVNKQT (132 aa). ATP-binding positions include Thr40, 66 to 72, and Thr95; that span reads GDGTINE. 3 residues coordinate Mg(2+): Leu215, Asp218, and Leu220. The active-site Proton acceptor is the Glu271.

Belongs to the diacylglycerol/lipid kinase family. YegS lipid kinase subfamily. Requires Mg(2+) as cofactor. Ca(2+) serves as cofactor.

It localises to the cytoplasm. Probably phosphorylates lipids; the in vivo substrate is unknown. This is Probable lipid kinase YegS from Escherichia coli (strain K12 / MC4100 / BW2952).